The primary structure comprises 1038 residues: GTPase-activating Rap/Ran-GAP domain-like protein 3 (1038 aa).

Phosphoserine is present on residues lysine 6 and serine 68. A Rap-GAP domain is found at 214–430 (LLVLEEQEGS…RTLDMLIRSL (217 aa)). Phosphoserine occurs at positions 449 and 455. The CNH domain occupies 512-824 (PHEAVCADPW…QLVASRSDIY (313 aa)). Disordered regions lie at residues 833 to 863 (EGSSGGSSKGASAHTSPQTPPARDTPLFPSS) and 937 to 1038 (LLGL…IDLK). A Phosphothreonine modification is found at threonine 851. The segment covering 1019-1028 (SGSSPFQLMA) has biased composition (polar residues).

The protein belongs to the GARNL3 family.

The polypeptide is GTPase-activating Rap/Ran-GAP domain-like protein 3 (Garnl3) (Mus musculus (Mouse)).